A 503-amino-acid polypeptide reads, in one-letter code: Maturase K (503 aa).

This sequence belongs to the intron maturase 2 family. MatK subfamily.

It localises to the plastid. The protein resides in the chloroplast. Functionally, usually encoded in the trnK tRNA gene intron. Probably assists in splicing its own and other chloroplast group II introns. This is Maturase K from Diospyros kaki (Kaki persimmon).